The chain runs to 359 residues: DNA integrity scanning protein DisA (359 aa).

The DAC domain maps to 7–146 (DDIFRATLAA…GRRYVLDGSA (140 aa)). ATP is bound by residues G74, L92, and 105 to 109 (TRHRT).

Belongs to the DisA family. In terms of assembly, homooctamer. Mg(2+) is required as a cofactor.

It catalyses the reaction 2 ATP = 3',3'-c-di-AMP + 2 diphosphate. Its function is as follows. Participates in a DNA-damage check-point that is active prior to asymmetric division when DNA is damaged. DisA forms globular foci that rapidly scan along the chromosomes during sporulation, searching for lesions. When a lesion is present, DisA pauses at the lesion site. This triggers a cellular response that culminates in a temporary block in sporulation initiation. Also has diadenylate cyclase activity, catalyzing the condensation of 2 ATP molecules into cyclic di-AMP (c-di-AMP). c-di-AMP acts as a signaling molecule that couples DNA integrity with progression of sporulation. The rise in c-di-AMP level generated by DisA while scanning the chromosome, operates as a positive signal that advances sporulation; upon encountering a lesion, the DisA focus arrests at the damaged site and halts c-di-AMP synthesis. The sequence is that of DNA integrity scanning protein DisA from Frankia alni (strain DSM 45986 / CECT 9034 / ACN14a).